The following is a 379-amino-acid chain: 1-deoxy-D-xylulose 5-phosphate reductoisomerase (379 aa).

6 residues coordinate NADPH: threonine 10, glycine 11, serine 12, isoleucine 13, asparagine 39, and asparagine 121. 1-deoxy-D-xylulose 5-phosphate is bound at residue lysine 122. An NADPH-binding site is contributed by glutamate 123. Position 147 (aspartate 147) interacts with Mn(2+). 1-deoxy-D-xylulose 5-phosphate is bound by residues serine 148, glutamate 149, serine 173, and histidine 196. Glutamate 149 is a Mn(2+) binding site. Glycine 202 contacts NADPH. The 1-deoxy-D-xylulose 5-phosphate site is built by serine 209, asparagine 214, lysine 215, and glutamate 218. Glutamate 218 serves as a coordination point for Mn(2+).

The protein belongs to the DXR family. Requires Mg(2+) as cofactor. Mn(2+) serves as cofactor.

It catalyses the reaction 2-C-methyl-D-erythritol 4-phosphate + NADP(+) = 1-deoxy-D-xylulose 5-phosphate + NADPH + H(+). The protein operates within isoprenoid biosynthesis; isopentenyl diphosphate biosynthesis via DXP pathway; isopentenyl diphosphate from 1-deoxy-D-xylulose 5-phosphate: step 1/6. In terms of biological role, catalyzes the NADPH-dependent rearrangement and reduction of 1-deoxy-D-xylulose-5-phosphate (DXP) to 2-C-methyl-D-erythritol 4-phosphate (MEP). This Chlamydia felis (strain Fe/C-56) (Chlamydophila felis) protein is 1-deoxy-D-xylulose 5-phosphate reductoisomerase.